The sequence spans 360 residues: Small ribosomal subunit protein mS22 (360 aa).

Ser-54 bears the Phosphoserine mark. Lys-211 carries the post-translational modification N6-acetyllysine.

This sequence belongs to the mitochondrion-specific ribosomal protein mS22 family. As to quaternary structure, component of the mitochondrial small ribosomal subunit (mt-SSU). Mature mammalian 55S mitochondrial ribosomes consist of a small (28S) and a large (39S) subunit. The 28S small subunit contains a 12S ribosomal RNA (12S mt-rRNA) and 30 different proteins. The 39S large subunit contains a 16S rRNA (16S mt-rRNA), a copy of mitochondrial valine transfer RNA (mt-tRNA(Val)), which plays an integral structural role, and 52 different proteins.

It is found in the mitochondrion. This Homo sapiens (Human) protein is Small ribosomal subunit protein mS22 (MRPS22).